A 178-amino-acid chain; its full sequence is Adenine phosphoribosyltransferase (178 aa).

It belongs to the purine/pyrimidine phosphoribosyltransferase family. As to quaternary structure, homodimer.

The protein localises to the cytoplasm. It carries out the reaction AMP + diphosphate = 5-phospho-alpha-D-ribose 1-diphosphate + adenine. Its pathway is purine metabolism; AMP biosynthesis via salvage pathway; AMP from adenine: step 1/1. In terms of biological role, catalyzes a salvage reaction resulting in the formation of AMP, that is energically less costly than de novo synthesis. The sequence is that of Adenine phosphoribosyltransferase from Novosphingobium aromaticivorans (strain ATCC 700278 / DSM 12444 / CCUG 56034 / CIP 105152 / NBRC 16084 / F199).